Reading from the N-terminus, the 356-residue chain is Fructose-1,6-bisphosphatase class 1 (356 aa).

A disordered region spans residues 1 to 26 (MAREWPMTHPSNHPMDHHHQTLQAHL). Residues Glu-101, Asp-120, Leu-122, and Asp-123 each contribute to the Mg(2+) site. Substrate is bound by residues 123 to 126 (DGSS) and Asn-211. Residue Glu-283 participates in Mg(2+) binding.

This sequence belongs to the FBPase class 1 family. In terms of assembly, homotetramer. Mg(2+) is required as a cofactor.

It localises to the cytoplasm. The catalysed reaction is beta-D-fructose 1,6-bisphosphate + H2O = beta-D-fructose 6-phosphate + phosphate. It participates in carbohydrate biosynthesis; Calvin cycle. The polypeptide is Fructose-1,6-bisphosphatase class 1 (Bradyrhizobium sp. (strain ORS 278)).